A 492-amino-acid chain; its full sequence is Catalase-2 (492 aa).

Catalysis depends on residues His65 and Asn138. Residue Tyr348 participates in heme binding.

It belongs to the catalase family. As to quaternary structure, homotetramer and heterotetramer. At least six or seven isozymes are produced from a mixture of 3 gene products. Interacts with NCA1. Interacts with LSD1. The cofactor is heme.

It localises to the cytoplasm. The protein resides in the cytosol. Its subcellular location is the peroxisome matrix. It catalyses the reaction 2 H2O2 = O2 + 2 H2O. Its function is as follows. Catalyzes the degradation of hydrogen peroxide (H(2)O(2)) generated by peroxisomal oxidases to water and oxygen, thereby protecting cells from the toxic effects of hydrogen peroxide. The protein is Catalase-2 (CAT2) of Arabidopsis thaliana (Mouse-ear cress).